Consider the following 231-residue polypeptide: Vacuolar protein sorting-associated protein 24 (231 aa).

Positions 184 to 195 are enriched in basic and acidic residues; sequence KAADAATHREQS. Residues 184–214 form a disordered region; that stretch reads KAADAATHREQSLKQALPSLSNGIAKDSTEI.

The protein belongs to the SNF7 family. As to quaternary structure, component of the endosomal sorting required for transport complex III (ESCRT-III).

Its subcellular location is the endosome membrane. It is found in the endomembrane system. Class E VPS protein implicated in concentration and sorting of cargo proteins of the multivesicular body (MVB) for incorporation into intralumenal vesicles. The lumenal sequestrated membrane proteins will be targeted into the vacuole after fusion of the endosome with the vacuole. This Schizosaccharomyces pombe (strain 972 / ATCC 24843) (Fission yeast) protein is Vacuolar protein sorting-associated protein 24 (vps24).